Here is an 89-residue protein sequence, read N- to C-terminus: Small ribosomal subunit protein uS15 (89 aa).

Belongs to the universal ribosomal protein uS15 family. Part of the 30S ribosomal subunit. Forms a bridge to the 50S subunit in the 70S ribosome, contacting the 23S rRNA.

Its function is as follows. One of the primary rRNA binding proteins, it binds directly to 16S rRNA where it helps nucleate assembly of the platform of the 30S subunit by binding and bridging several RNA helices of the 16S rRNA. In terms of biological role, forms an intersubunit bridge (bridge B4) with the 23S rRNA of the 50S subunit in the ribosome. The sequence is that of Small ribosomal subunit protein uS15 from Magnetococcus marinus (strain ATCC BAA-1437 / JCM 17883 / MC-1).